Consider the following 908-residue polypeptide: MMPLRILVWNADGVSTKLPEVECFVRRHEIDVLLLSETHCKGAETPKLFGFVAYTANDPSGGNAKGGAAILIKNSLAHFPLTPIATAKVQLAPAVIETALGPISFGAVYCPPRFAWTTDEFKDILEEFQTKFIVAGDWNASHWLWGAGRSNQRGIALANLVLNSEVDSLATGGPTRYPYGCRGSPGYIDFALTKGVLGIHANISAVVELSSDHLPLVITLDAGAISYPKMERLITRRTNLEVFQSQLESTLPLNTAINSGQDVDDAIELLTNNIKSAARLATRSISRQPAADRIPIPREILLLIAEKRRLRTRWMRSRHPSDKTEWNRALSRLRCALVLHKAAWFDERLANTGVESEATHSLWKATRAIKRRCTRKAPLVDSNGTWCRTDLGQAEVFAAHLAERFQPFKLASLQQVEETQDQLNQALQMDMPITPFEPCEVAEVIVRQSNNKAPGHDVICNATLKALPRQAILYITLVFNAIVRLQYFPYQWKLGIISMIHKPGKPEREPASYRPISLLPSISKVFERLIAVRIVSIMEAQGITPEHQFGFRAGHCTVEQLHRVVEQILTAYDSKEYCNSLFLDIREAFDRVWHIGLQLKIKQTLPAPYFGLLKSYLEGRRFAVRFHSAISTEHNVAAGVPQGSVLGPLLYCLYSHDMPQPDVSLYGKSMLATFADDVCVTYRSRCEHDAADGIQDFAYRFSEWARRWNIGINSSKSNNVCFTLKRRTPPPVYIEEVPVPQPNAAKYLGVLLDRRLTFSKHVTDIRTRLRAKVAKHYWLLSSRSKLSLSNKLTIYKQILAPNWKYGCQIWGLACDSHIKRIQAIQNKVARLITGCEWFVRNTTLHRDLKLATVFDEINKHSSRYHDRLERHRNRLASALNRSRPPRRLNRRQPRDLITRSPLTRVRRS.

In terms of domain architecture, Reverse transcriptase spans 481-752 (AIVRLQYFPY…NAAKYLGVLL (272 aa)). Positions 883–908 (RPPRRLNRRQPRDLITRSPLTRVRRS) are disordered.

It depends on Mg(2+) as a cofactor. Mn(2+) is required as a cofactor.

The enzyme catalyses DNA(n) + a 2'-deoxyribonucleoside 5'-triphosphate = DNA(n+1) + diphosphate. The polypeptide is Probable RNA-directed DNA polymerase from transposon X-element (X-element\ORF2) (Drosophila melanogaster (Fruit fly)).